We begin with the raw amino-acid sequence, 639 residues long: Protein phosphatase 2C 35 (639 aa).

Residues 227–630 form the PPM-type phosphatase domain; it reads GGDPCGLQWA…DDVSVIVISL (404 aa). Mn(2+)-binding residues include Asp-262 and Gly-263. Residues 295 to 341 are disordered; it reads QNVQHDQRPDQPGSAPSTTASDNQDQWGRRRRTRRSRPPRGADDDQR. The segment covering 308 to 320 has biased composition (polar residues); sequence SAPSTTASDNQDQ. Positions 323–332 are enriched in basic residues; that stretch reads RRRRTRRSRP. Mn(2+)-binding residues include Asp-558 and Asp-621.

The protein belongs to the PP2C family. Interacts with XA21 (via juxtamembrane and kinase domains). The cofactor is Mg(2+). Requires Mn(2+) as cofactor.

It is found in the cell membrane. The catalysed reaction is O-phospho-L-seryl-[protein] + H2O = L-seryl-[protein] + phosphate. The enzyme catalyses O-phospho-L-threonyl-[protein] + H2O = L-threonyl-[protein] + phosphate. Functionally, protein phosphatase that acts on XA21 pathogen recognition receptor. Negatively regulates cell death and XA21-mediated innate immunity. This Oryza sativa subsp. japonica (Rice) protein is Protein phosphatase 2C 35 (XB15).